We begin with the raw amino-acid sequence, 144 residues long: Maximins 4/H3 type 1 (144 aa).

A signal peptide spans 1–18 (MNFKYIIAVSFFIASAYA). Residues 19 to 43 (RSEEKDVQSLSQRDVLEEESLREIR) constitute a propeptide that is removed on maturation. At Asn-70 the chain carries Asparagine amide. Positions 74 to 123 (TAEDHEVMKRLEAVMRDLDSLDHPEEASERETRGFNQEEIANLFTKKEKR) are excised as a propeptide. Ile-143 carries the isoleucine amide modification.

The protein belongs to the bombinin family. In terms of tissue distribution, expressed by the skin glands.

Its subcellular location is the secreted. Maximin-4 shows antibacterial activity against both Gram-positive and Gram-negative bacteria. It also shows antimicrobial activity against the fungus C.albicans, but not against A.flavus nor P.uticale. It has little hemolytic activity. It does not possess a significant cytotoxicity against tumor cell lines. It does not possess a significant anti-HIV activity. Functionally, maximin-H3 shows antibacterial activity against both Gram-positive and Gram-negative bacteria. It also shows antimicrobial activity against the fungus C.albicans. Shows strong hemolytic activity. The sequence is that of Maximins 4/H3 type 1 from Bombina maxima (Giant fire-bellied toad).